The chain runs to 384 residues: Lipid-A-disaccharide synthase 1 (384 aa).

It belongs to the LpxB family.

It catalyses the reaction a lipid X + a UDP-2-N,3-O-bis[(3R)-3-hydroxyacyl]-alpha-D-glucosamine = a lipid A disaccharide + UDP + H(+). The protein operates within bacterial outer membrane biogenesis; LPS lipid A biosynthesis. Condensation of UDP-2,3-diacylglucosamine and 2,3-diacylglucosamine-1-phosphate to form lipid A disaccharide, a precursor of lipid A, a phosphorylated glycolipid that anchors the lipopolysaccharide to the outer membrane of the cell. The polypeptide is Lipid-A-disaccharide synthase 1 (Legionella pneumophila (strain Paris)).